Consider the following 291-residue polypeptide: Cell division protein FtsX (291 aa).

The Cytoplasmic segment spans residues 1-18 (MSSNFDKFQKRRLISSYF). A helical membrane pass occupies residues 19 to 39 (SVVLSVFLVLFLLGVLGLFII). At 40-162 (NSKKLADDFK…VNLVNDNIKK (123 aa)) the chain is on the periplasmic side. The chain crosses the membrane as a helical span at residues 163–183 (VSMWILIISGFLTVIAVLLIN). Residues 184–220 (SSLRLSIHSNRFIIKTMQMVGATKSFIRKPFVMRSVK) are Cytoplasmic-facing. A helical membrane pass occupies residues 221–241 (LGMLGALLAIIALIGLLFYVE). Residues 242-253 (TNFPGLGILEDK) are Periplasmic-facing. The chain crosses the membrane as a helical span at residues 254–274 (ALIGLVLLAVFGLGVLITWVS). The Cytoplasmic portion of the chain corresponds to 275 to 291 (THFATQRFLNLRTDDLY).

It belongs to the ABC-4 integral membrane protein family. FtsX subfamily.

It localises to the cell inner membrane. Functionally, required for cell division and gliding motility. This Flavobacterium johnsoniae (strain ATCC 17061 / DSM 2064 / JCM 8514 / BCRC 14874 / CCUG 350202 / NBRC 14942 / NCIMB 11054 / UW101) (Cytophaga johnsonae) protein is Cell division protein FtsX.